The chain runs to 448 residues: Glutamate--tRNA ligase 2 (448 aa).

Positions 9–19 (PSPTGKLHIGN) match the 'HIGH' region motif. The 'KMSKS' region signature appears at 240–244 (KISKR). K243 contacts ATP.

Belongs to the class-I aminoacyl-tRNA synthetase family. Glutamate--tRNA ligase type 1 subfamily. In terms of assembly, monomer.

Its subcellular location is the cytoplasm. The catalysed reaction is tRNA(Glu) + L-glutamate + ATP = L-glutamyl-tRNA(Glu) + AMP + diphosphate. In terms of biological role, catalyzes the attachment of glutamate to tRNA(Glu) in a two-step reaction: glutamate is first activated by ATP to form Glu-AMP and then transferred to the acceptor end of tRNA(Glu). This chain is Glutamate--tRNA ligase 2, found in Orientia tsutsugamushi (strain Boryong) (Rickettsia tsutsugamushi).